The chain runs to 162 residues: Transcription elongation factor GreB (162 aa).

Residues 52–76 (GKRRLREIDRRIRFLSKRLEALQII) are a coiled coil.

This sequence belongs to the GreA/GreB family. GreB subfamily.

Functionally, necessary for efficient RNA polymerase transcription elongation past template-encoded arresting sites. The arresting sites in DNA have the property of trapping a certain fraction of elongating RNA polymerases that pass through, resulting in locked ternary complexes. Cleavage of the nascent transcript by cleavage factors such as GreA or GreB allows the resumption of elongation from the new 3'terminus. GreB releases sequences of up to 9 nucleotides in length. The polypeptide is Transcription elongation factor GreB (Haemophilus ducreyi (strain 35000HP / ATCC 700724)).